The chain runs to 329 residues: Protein-arginine N-acetylglucosaminyltransferase NleB (329 aa).

The N-beta-linked (GlcNAc) arginine; by autocatalysis glycan is linked to arginine 13. 48–50 (QWF) contacts UDP-N-acetyl-alpha-D-glucosamine. N-beta-linked (GlcNAc) arginine; by autocatalysis glycosylation is present at arginine 53. Tyrosine 72 serves as a coordination point for UDP-N-acetyl-alpha-D-glucosamine. Arginine 159 carries N-beta-linked (GlcNAc) arginine; by autocatalysis glycosylation. 219–222 (YLDA) contacts UDP-N-acetyl-alpha-D-glucosamine. The DXD motif signature appears at 221–223 (DAD). Aspartate 223 contributes to the Mn(2+) binding site. The active-site Proton acceptor is glutamate 253. The N-beta-linked (GlcNAc) arginine; by autocatalysis glycan is linked to arginine 293. Mn(2+) contacts are provided by asparagine 320 and serine 322. Residues serine 322 and 327–329 (SSW) contribute to the UDP-N-acetyl-alpha-D-glucosamine site.

It belongs to the glycosyltransferase NleB family. Requires Mn(2+) as cofactor. Auto-glycosylated: arginine GlcNAcylation is required for activity toward death domain-containing host target proteins.

It is found in the secreted. The protein resides in the host cell. It carries out the reaction L-arginyl-[protein] + UDP-N-acetyl-alpha-D-glucosamine = N(omega)-(N-acetyl-beta-D-glucosaminyl)-L-arginyl-[protein] + UDP + H(+). In terms of biological role, protein-arginine N-acetylglucosaminyltransferase effector that disrupts TNF signaling in infected cells, including NF-kappa-B signaling, apoptosis and necroptosis. Acts by catalyzing the transfer of a single N-acetylglucosamine (GlcNAc) to a conserved arginine residue in the death domain of host proteins FADD, TNFRSF1A and RIPK1: arginine GlcNAcylation prevents homotypic/heterotypic death domain interactions and assembly of the oligomeric TNF-alpha receptor complex, thereby disrupting TNF signaling. Has preference for host FADD as substrate compared to TNFRSF1A and RIPK1. Also acts on host proteins without a death domain: catalyzes GlcNAcylation of host GAPDH protein, thereby preventing GAPDH interaction with TRAF2 and TRAF3, leading to inhibit NF-kappa-B signaling and type I interferon production, respectively. Also displays intra-bacterial activity by mediating GlcNAcylation of glutathione synthetase GshB. Catalyzes auto-GlcNAcylation, which is required for activity toward death domain-containing host target proteins. In Citrobacter rodentium, this protein is Protein-arginine N-acetylglucosaminyltransferase NleB.